The chain runs to 447 residues: Ribosomal protein uS12 methylthiotransferase RimO (447 aa).

Residues 10–120 (PKVGFVSLGC…VVNAVHDVVP (111 aa)) form the MTTase N-terminal domain. 6 residues coordinate [4Fe-4S] cluster: Cys-19, Cys-55, Cys-84, Cys-153, Cys-157, and Cys-160. Positions 139-377 (LTPRHYAYLK…MAHQQAISAA (239 aa)) constitute a Radical SAM core domain. In terms of domain architecture, TRAM spans 380–447 (QMKIGKEIEV…DEYDLWAEML (68 aa)).

It belongs to the methylthiotransferase family. RimO subfamily. Requires [4Fe-4S] cluster as cofactor.

It is found in the cytoplasm. The catalysed reaction is L-aspartate(89)-[ribosomal protein uS12]-hydrogen + (sulfur carrier)-SH + AH2 + 2 S-adenosyl-L-methionine = 3-methylsulfanyl-L-aspartate(89)-[ribosomal protein uS12]-hydrogen + (sulfur carrier)-H + 5'-deoxyadenosine + L-methionine + A + S-adenosyl-L-homocysteine + 2 H(+). Catalyzes the methylthiolation of an aspartic acid residue of ribosomal protein uS12. The protein is Ribosomal protein uS12 methylthiotransferase RimO of Pseudomonas syringae pv. syringae (strain B728a).